The chain runs to 619 residues: Alpha-(1,6)-fucosyltransferase (619 aa).

The Cytoplasmic portion of the chain corresponds to 1–17 (MLLVRQLFGASANSWAR). A helical; Signal-anchor for type II membrane protein membrane pass occupies residues 18-38 (ALIIFVLAWIGLVYVFVVKLT). Over 39 to 619 (NTQGQQAAGE…TAKLPLYAGI (581 aa)) the chain is Lumenal. Intrachain disulfides connect cysteine 253/cysteine 315, cysteine 261/cysteine 279, and cysteine 267/cysteine 271. The GT23 domain maps to 255-539 (NARKLVCKLN…PDAAHRFKSL (285 aa)). Positions 345–351 (PRPPYLP) match the SH3-binding motif. The tract at residues 411–412 (RR) is important for donor substrate binding. Cysteines 511 and 518 form a disulfide. The SH3 domain maps to 548-609 (QNAHNRRVVI…PSFKVEEKVD (62 aa)).

The protein belongs to the glycosyltransferase 23 family. The cofactor is Mn(2+). Mg(2+) is required as a cofactor.

The protein localises to the golgi apparatus. It is found in the golgi stack membrane. It carries out the reaction N(4)-{beta-D-GlcNAc-(1-&gt;2)-alpha-D-Man-(1-&gt;3)-[beta-D-GlcNAc-(1-&gt;2)-alpha-D-Man-(1-&gt;6)]-beta-D-Man-(1-&gt;4)-beta-D-GlcNAc-(1-&gt;4)-beta-D-GlcNAc}-L-asparaginyl-[protein] + GDP-beta-L-fucose = an N(4)-{beta-D-GlcNAc-(1-&gt;2)-alpha-D-Man-(1-&gt;3)-[beta-D-GlcNAc-(1-&gt;2)-alpha-D-Man-(1-&gt;6)]-beta-D-Man-(1-&gt;4)-beta-D-GlcNAc-(1-&gt;4)-[alpha-L-Fuc-(1-&gt;6)]-beta-D-GlcNAc}-L-asparaginyl-[protein] + GDP + H(+). It participates in protein modification; protein glycosylation. Its function is as follows. Catalyzes the addition of fucose in alpha 1-6 linkage to the first GlcNAc residue, next to the peptide chains in N-glycans. The addition is prevented if the GlcNAc residue is already fucosylated. This chain is Alpha-(1,6)-fucosyltransferase (FucT6), found in Drosophila melanogaster (Fruit fly).